Consider the following 355-residue polypeptide: MKIRIDIPHHPYDIQIEKGCLAQAGQWLRELWQPQKVVIVTDNHVASLYAEKVKLSLEDAGFQVAVFDFLEGEERKNLTTVQKVYEFLVKQGLTRSDGIVALGGGVVGDLAGFVASTYMRGIHFVQIPTSLTAQVDSSIGGKTGVNTPFAKNMVGTFAQPDGVLIDPLVLETLGKRELIEGMGEVIKYGLIEDPELWALLTELDGSVESILEHAETLIEHSCQVKRKMVVEDELDNGVRLYLNFGHTIGHAIEATAGYGKVMHGEAVAMGMVQISKVAEKKGLMPAGITQSITDMCQKFGLPVDYENWDVDKLYQALTHDKKARGNTLKLVLVPELGSATIHPVSLEEMKDYLVK.

Residues 71-76 (EGEERK), 105-109 (GVVGD), 129-130 (TS), Lys142, and Lys151 each bind NAD(+). Zn(2+) contacts are provided by Glu184, His246, and His263.

It belongs to the sugar phosphate cyclases superfamily. Dehydroquinate synthase family. Co(2+) is required as a cofactor. The cofactor is Zn(2+). It depends on NAD(+) as a cofactor.

It is found in the cytoplasm. It carries out the reaction 7-phospho-2-dehydro-3-deoxy-D-arabino-heptonate = 3-dehydroquinate + phosphate. Its pathway is metabolic intermediate biosynthesis; chorismate biosynthesis; chorismate from D-erythrose 4-phosphate and phosphoenolpyruvate: step 2/7. Catalyzes the conversion of 3-deoxy-D-arabino-heptulosonate 7-phosphate (DAHP) to dehydroquinate (DHQ). The sequence is that of 3-dehydroquinate synthase from Streptococcus pneumoniae (strain ATCC 700669 / Spain 23F-1).